Consider the following 502-residue polypeptide: Lysine--tRNA ligase (502 aa).

Glutamate 413 and glutamate 420 together coordinate Mg(2+).

This sequence belongs to the class-II aminoacyl-tRNA synthetase family. As to quaternary structure, homodimer. It depends on Mg(2+) as a cofactor.

It localises to the cytoplasm. The catalysed reaction is tRNA(Lys) + L-lysine + ATP = L-lysyl-tRNA(Lys) + AMP + diphosphate. The polypeptide is Lysine--tRNA ligase (lysS) (Haemophilus influenzae (strain ATCC 51907 / DSM 11121 / KW20 / Rd)).